Here is a 212-residue protein sequence, read N- to C-terminus: COP9 signalosome complex subunit 8 (212 aa).

Positions 26 to 193 (TSLSAYEEQA…KPVVTAPPKD (168 aa)) constitute a PCI domain.

It belongs to the CSN8 family. Component of the COP9 signalosome (CSN) complex.

The protein resides in the cytoplasm. It localises to the nucleus. Functionally, component of the COP9 signalosome (CSN) complex that acts as an regulator of the ubiquitin (Ubl) conjugation pathway by mediating the deneddylation of the cullin subunit of SCF-type E3 ubiquitin-protein ligase complexes. The CSN complex seems to link protein degradation to sexual development. The sequence is that of COP9 signalosome complex subunit 8 (csnH) from Emericella nidulans (strain FGSC A4 / ATCC 38163 / CBS 112.46 / NRRL 194 / M139) (Aspergillus nidulans).